A 315-amino-acid chain; its full sequence is Aspartate carbamoyltransferase catalytic subunit (315 aa).

Residues Arg65 and Thr66 each coordinate carbamoyl phosphate. An L-aspartate-binding site is contributed by Lys93. Carbamoyl phosphate-binding residues include Arg115, His145, and Gln148. Residues Arg179 and Arg234 each coordinate L-aspartate. Positions 275 and 276 each coordinate carbamoyl phosphate.

Belongs to the aspartate/ornithine carbamoyltransferase superfamily. ATCase family. As to quaternary structure, heterododecamer (2C3:3R2) of six catalytic PyrB chains organized as two trimers (C3), and six regulatory PyrI chains organized as three dimers (R2).

It carries out the reaction carbamoyl phosphate + L-aspartate = N-carbamoyl-L-aspartate + phosphate + H(+). It functions in the pathway pyrimidine metabolism; UMP biosynthesis via de novo pathway; (S)-dihydroorotate from bicarbonate: step 2/3. Catalyzes the condensation of carbamoyl phosphate and aspartate to form carbamoyl aspartate and inorganic phosphate, the committed step in the de novo pyrimidine nucleotide biosynthesis pathway. In Xanthomonas euvesicatoria pv. vesicatoria (strain 85-10) (Xanthomonas campestris pv. vesicatoria), this protein is Aspartate carbamoyltransferase catalytic subunit.